A 395-amino-acid polypeptide reads, in one-letter code: Chalcone synthase 3 (395 aa).

Val2 carries the N-acetylvaline modification. Cys169 is a catalytic residue.

Belongs to the thiolase-like superfamily. Chalcone/stilbene synthases family.

The catalysed reaction is (E)-4-coumaroyl-CoA + 3 malonyl-CoA + 3 H(+) = 2',4,4',6'-tetrahydroxychalcone + 3 CO2 + 4 CoA. Its pathway is secondary metabolite biosynthesis; flavonoid biosynthesis. Functionally, the primary product of this enzyme is 4,2',4',6'-tetrahydroxychalcone (also termed naringenin-chalcone or chalcone) which can under specific conditions spontaneously isomerize into naringenin. The protein is Chalcone synthase 3 (CHS3) of Sinapis alba (White mustard).